The sequence spans 515 residues: Bifunctional purine biosynthesis protein PurH (515 aa).

Residues 1–145 (MTKRALISVS…KNHASVTVVV (145 aa)) form the MGS-like domain.

It belongs to the PurH family.

It carries out the reaction (6R)-10-formyltetrahydrofolate + 5-amino-1-(5-phospho-beta-D-ribosyl)imidazole-4-carboxamide = 5-formamido-1-(5-phospho-D-ribosyl)imidazole-4-carboxamide + (6S)-5,6,7,8-tetrahydrofolate. The catalysed reaction is IMP + H2O = 5-formamido-1-(5-phospho-D-ribosyl)imidazole-4-carboxamide. It functions in the pathway purine metabolism; IMP biosynthesis via de novo pathway; 5-formamido-1-(5-phospho-D-ribosyl)imidazole-4-carboxamide from 5-amino-1-(5-phospho-D-ribosyl)imidazole-4-carboxamide (10-formyl THF route): step 1/1. It participates in purine metabolism; IMP biosynthesis via de novo pathway; IMP from 5-formamido-1-(5-phospho-D-ribosyl)imidazole-4-carboxamide: step 1/1. This chain is Bifunctional purine biosynthesis protein PurH, found in Streptococcus pyogenes serotype M3 (strain ATCC BAA-595 / MGAS315).